An 810-amino-acid polypeptide reads, in one-letter code: Sister chromatid cohesion 1 protein 2 (810 aa).

3 disordered regions span residues 200-244 (RDTT…LLEP), 273-315 (SHES…SECG), and 606-626 (MGASSTTSGTAHQTENAAETP). Basic and acidic residues-rich tracts occupy residues 220-234 (EPSRDHQNASRHRED) and 273-310 (SHESSGDNLHRDGHTENLESEKTSKKTSCEEMQHDRSL). Residues 606-622 (MGASSTTSGTAHQTENA) are compositionally biased toward polar residues.

This sequence belongs to the rad21 family. Component of the cohesin complex. As to expression, low expression in shoots, buds, siliques, leaves and roots. Found in, but not limited to, actively dividing cells: in procambium, protoderm and ground meristem in roots, and in shoot and floral meristems.

It is found in the nucleus. May be involved in sister chromatid cohesion during mitosis. This Arabidopsis thaliana (Mouse-ear cress) protein is Sister chromatid cohesion 1 protein 2 (SYN2).